Reading from the N-terminus, the 131-residue chain is Translation initiation factor 5A (131 aa).

Hypusine is present on K37.

It belongs to the eIF-5A family.

It localises to the cytoplasm. Functionally, functions by promoting the formation of the first peptide bond. The polypeptide is Translation initiation factor 5A (eIF5A) (Methanococcus vannielii (strain ATCC 35089 / DSM 1224 / JCM 13029 / OCM 148 / SB)).